The following is a 265-amino-acid chain: Imidazole glycerol phosphate synthase subunit HisF (265 aa).

Residues Asp12 and Asp131 contribute to the active site.

The protein belongs to the HisA/HisF family. Heterodimer of HisH and HisF.

Its subcellular location is the cytoplasm. It carries out the reaction 5-[(5-phospho-1-deoxy-D-ribulos-1-ylimino)methylamino]-1-(5-phospho-beta-D-ribosyl)imidazole-4-carboxamide + L-glutamine = D-erythro-1-(imidazol-4-yl)glycerol 3-phosphate + 5-amino-1-(5-phospho-beta-D-ribosyl)imidazole-4-carboxamide + L-glutamate + H(+). It functions in the pathway amino-acid biosynthesis; L-histidine biosynthesis; L-histidine from 5-phospho-alpha-D-ribose 1-diphosphate: step 5/9. Its function is as follows. IGPS catalyzes the conversion of PRFAR and glutamine to IGP, AICAR and glutamate. The HisF subunit catalyzes the cyclization activity that produces IGP and AICAR from PRFAR using the ammonia provided by the HisH subunit. This is Imidazole glycerol phosphate synthase subunit HisF from Alkalilimnicola ehrlichii (strain ATCC BAA-1101 / DSM 17681 / MLHE-1).